A 358-amino-acid polypeptide reads, in one-letter code: DNA-directed RNA polymerase subunit alpha (358 aa).

Residues 1–244 (MENKLFSCIE…NLFLSIYDTS (244 aa)) form an alpha N-terminal domain (alpha-NTD) region. The segment at 287–358 (YKTSFDKNLT…KMVKYGTVNK (72 aa)) is alpha C-terminal domain (alpha-CTD).

It belongs to the RNA polymerase alpha chain family. In terms of assembly, homodimer. The RNAP catalytic core consists of 2 alpha, 1 beta, 1 beta' and 1 omega subunit. When a sigma factor is associated with the core the holoenzyme is formed, which can initiate transcription.

It localises to the plastid. Its subcellular location is the chloroplast. The enzyme catalyses RNA(n) + a ribonucleoside 5'-triphosphate = RNA(n+1) + diphosphate. In terms of biological role, DNA-dependent RNA polymerase catalyzes the transcription of DNA into RNA using the four ribonucleoside triphosphates as substrates. The sequence is that of DNA-directed RNA polymerase subunit alpha (rpoA) from Bigelowiella natans (Pedinomonas minutissima).